We begin with the raw amino-acid sequence, 145 residues long: 3-hydroxyacyl-[acyl-carrier-protein] dehydratase FabZ (145 aa).

His51 is a catalytic residue.

It belongs to the thioester dehydratase family. FabZ subfamily.

Its subcellular location is the cytoplasm. The enzyme catalyses a (3R)-hydroxyacyl-[ACP] = a (2E)-enoyl-[ACP] + H2O. Involved in unsaturated fatty acids biosynthesis. Catalyzes the dehydration of short chain beta-hydroxyacyl-ACPs and long chain saturated and unsaturated beta-hydroxyacyl-ACPs. This Staphylococcus carnosus (strain TM300) protein is 3-hydroxyacyl-[acyl-carrier-protein] dehydratase FabZ.